Reading from the N-terminus, the 680-residue chain is DNA-directed RNA polymerase subunit beta' (680 aa).

Cys-69, Cys-71, Cys-87, and Cys-90 together coordinate Zn(2+). Asp-489, Asp-491, and Asp-493 together coordinate Mg(2+).

It belongs to the RNA polymerase beta' chain family. RpoC1 subfamily. As to quaternary structure, in plastids the minimal PEP RNA polymerase catalytic core is composed of four subunits: alpha, beta, beta', and beta''. When a (nuclear-encoded) sigma factor is associated with the core the holoenzyme is formed, which can initiate transcription. The cofactor is Mg(2+). Zn(2+) is required as a cofactor.

It localises to the plastid. Its subcellular location is the chloroplast. It carries out the reaction RNA(n) + a ribonucleoside 5'-triphosphate = RNA(n+1) + diphosphate. Its function is as follows. DNA-dependent RNA polymerase catalyzes the transcription of DNA into RNA using the four ribonucleoside triphosphates as substrates. This chain is DNA-directed RNA polymerase subunit beta', found in Lepidium virginicum (Virginia pepperweed).